A 177-amino-acid polypeptide reads, in one-letter code: MEEREESISFVDQRFLGSKPLDDTNVLEYFSGSPFYDKSCNNEILKMQTQFRGLDQKSKLFSMVGIFYEVESSNHEKTLFVIRKAYNHGDTAETLGMYYIIHGHVYAAPTNYSIYRCRMGDSMWQLNSFIDRMMEKRRFNPFSPPKGRRLAKSLEDSKDLDFMMEIFNDFKKEQAES.

The protein belongs to the Mediator complex subunit 6 family. In terms of assembly, component of the Mediator complex.

It localises to the nucleus. Functionally, component of the Mediator complex, a coactivator involved in the regulated transcription of nearly all RNA polymerase II-dependent genes. Mediator functions as a bridge to convey information from gene-specific regulatory proteins to the basal RNA polymerase II transcription machinery. Mediator is recruited to promoters by direct interactions with regulatory proteins and serves as a scaffold for the assembly of a functional preinitiation complex with RNA polymerase II and the general transcription factors. In Encephalitozoon cuniculi (strain GB-M1) (Microsporidian parasite), this protein is Mediator of RNA polymerase II transcription subunit 6 (MED6).